The primary structure comprises 100 residues: Urease subunit gamma (100 aa).

The protein belongs to the urease gamma subunit family. In terms of assembly, heterotrimer of UreA (gamma), UreB (beta) and UreC (alpha) subunits. Three heterotrimers associate to form the active enzyme.

The protein resides in the cytoplasm. It carries out the reaction urea + 2 H2O + H(+) = hydrogencarbonate + 2 NH4(+). It participates in nitrogen metabolism; urea degradation; CO(2) and NH(3) from urea (urease route): step 1/1. This Escherichia coli O157:H7 (strain EC4115 / EHEC) protein is Urease subunit gamma.